Consider the following 374-residue polypeptide: Putative F-box protein At3g16590 (374 aa).

An F-box domain is found at 1 to 45 (MPTKLPLELEDEILLRVPPLSLTRFRTVCKRWNTLFNDQRFINNH).

The polypeptide is Putative F-box protein At3g16590 (Arabidopsis thaliana (Mouse-ear cress)).